Here is a 297-residue protein sequence, read N- to C-terminus: uncharacterized protein (297 aa).

This sequence belongs to the metallo-dependent hydrolases superfamily.

This is an uncharacterized protein from Sinorhizobium fredii (strain NBRC 101917 / NGR234).